The following is a 386-amino-acid chain: Methylthioribose-1-phosphate isomerase (386 aa).

Residue D258 is the Proton donor of the active site.

This sequence belongs to the eIF-2B alpha/beta/delta subunits family. MtnA subfamily.

It is found in the cytoplasm. The protein resides in the nucleus. It carries out the reaction 5-(methylsulfanyl)-alpha-D-ribose 1-phosphate = 5-(methylsulfanyl)-D-ribulose 1-phosphate. Its pathway is amino-acid biosynthesis; L-methionine biosynthesis via salvage pathway; L-methionine from S-methyl-5-thio-alpha-D-ribose 1-phosphate: step 1/6. Its function is as follows. Catalyzes the interconversion of methylthioribose-1-phosphate (MTR-1-P) into methylthioribulose-1-phosphate (MTRu-1-P). The protein is Methylthioribose-1-phosphate isomerase of Uncinocarpus reesii (strain UAMH 1704).